We begin with the raw amino-acid sequence, 458 residues long: MPN domain-containing protein (458 aa).

The interval 1 to 37 (MGSEPPSSPQVVEEGADEEDEELSGAEDADLRSSSGR) is disordered. Residues 14-28 (EGADEEDEELSGAED) are compositionally biased toward acidic residues. One can recognise an RAMA domain in the interval 42-137 (TRRGITLRVL…QYKTTWLHKY (96 aa)). DNA-binding residues include serine 94, serine 96, and tryptophan 116. The disordered stretch occupies residues 147 to 175 (SEGEDDEMGDDDEEEGKTTIPVEDKNKKS). Residues 148–161 (EGEDDEMGDDDEEE) are compositionally biased toward acidic residues. The region spanning 229–364 (VAVSSNVLLL…VASTITPFWV (136 aa)) is the MPN domain. The Zn(2+) site is built by histidine 306, histidine 308, and aspartate 319. The JAMM motif signature appears at 306–319 (HSHPRGPALPSLQD).

The protein belongs to the peptidase M67 family. In terms of processing, degraded following binding to N(6)-methyladenosine methylated DNA (m6A).

Functionally, probable protease. Acts as a sensor of N(6)-methyladenosine methylation on DNA (m6A): recognizes and binds m6A DNA, leading to its degradation. Binds only double strand DNA (dsDNA) in a sequence-independent manner. The protein is MPN domain-containing protein of Danio rerio (Zebrafish).